A 285-amino-acid chain; its full sequence is Acetyl-coenzyme A carboxylase carboxyl transferase subunit beta (285 aa).

One can recognise a CoA carboxyltransferase N-terminal domain in the interval 29–285 (IMTKCPKCKK…ILKIHQEVSN (257 aa)). 4 residues coordinate Zn(2+): Cys-33, Cys-36, Cys-52, and Cys-55. A C4-type zinc finger spans residues 33 to 55 (CPKCKKIMYTKELNENLNVCFNC).

This sequence belongs to the AccD/PCCB family. In terms of assembly, acetyl-CoA carboxylase is a heterohexamer composed of biotin carboxyl carrier protein (AccB), biotin carboxylase (AccC) and two subunits each of ACCase subunit alpha (AccA) and ACCase subunit beta (AccD). It depends on Zn(2+) as a cofactor.

The protein localises to the cytoplasm. It catalyses the reaction N(6)-carboxybiotinyl-L-lysyl-[protein] + acetyl-CoA = N(6)-biotinyl-L-lysyl-[protein] + malonyl-CoA. Its pathway is lipid metabolism; malonyl-CoA biosynthesis; malonyl-CoA from acetyl-CoA: step 1/1. Functionally, component of the acetyl coenzyme A carboxylase (ACC) complex. Biotin carboxylase (BC) catalyzes the carboxylation of biotin on its carrier protein (BCCP) and then the CO(2) group is transferred by the transcarboxylase to acetyl-CoA to form malonyl-CoA. The polypeptide is Acetyl-coenzyme A carboxylase carboxyl transferase subunit beta (Staphylococcus epidermidis (strain ATCC 12228 / FDA PCI 1200)).